The following is a 176-amino-acid chain: Lipoprotein signal peptidase (176 aa).

The next 4 membrane-spanning stretches (helical) occupy residues 10 to 30 (LFQF…AIVL), 48 to 68 (VPVL…AFSF), 78 to 98 (YFFT…LLRM), and 102 to 122 (MVVL…NLID). Catalysis depends on residues aspartate 131 and aspartate 149. A helical membrane pass occupies residues 141-161 (HFPAFNIADSAITLGTILLLI).

It belongs to the peptidase A8 family.

It is found in the cell inner membrane. The enzyme catalyses Release of signal peptides from bacterial membrane prolipoproteins. Hydrolyzes -Xaa-Yaa-Zaa-|-(S,diacylglyceryl)Cys-, in which Xaa is hydrophobic (preferably Leu), and Yaa (Ala or Ser) and Zaa (Gly or Ala) have small, neutral side chains.. It participates in protein modification; lipoprotein biosynthesis (signal peptide cleavage). Functionally, this protein specifically catalyzes the removal of signal peptides from prolipoproteins. This Acinetobacter baumannii (strain ATCC 17978 / DSM 105126 / CIP 53.77 / LMG 1025 / NCDC KC755 / 5377) protein is Lipoprotein signal peptidase.